The primary structure comprises 421 residues: D-amino acid dehydrogenase (421 aa).

4–18 (VLVLGSGVVGLTSAW) contacts FAD.

The protein belongs to the DadA oxidoreductase family. FAD serves as cofactor.

It carries out the reaction a D-alpha-amino acid + A + H2O = a 2-oxocarboxylate + AH2 + NH4(+). Functionally, oxidative deamination of D-amino acids. This is D-amino acid dehydrogenase from Vibrio cholerae serotype O1 (strain ATCC 39315 / El Tor Inaba N16961).